Here is a 181-residue protein sequence, read N- to C-terminus: MSFVPTKVFFTKGVGRHKEYLSSFELALRDAKIEKCNLVTVSSIFPPKCERISVEEGLKHLKPGQITFAVMARNSTNENNRLISASVGVALPADETQYGYLSEHHPYGETAEHSGEYAEDLAATMLATTLGIEFDPNKDWDEREGIYKMSGKIVNSFNITESAEGETGLWTTVISCAVLLP.

The residue at position 43 (serine 43) is a Pyruvic acid (Ser).

The protein belongs to the PdaD family. It depends on pyruvate as a cofactor.

The catalysed reaction is L-arginine + H(+) = agmatine + CO2. The chain is Probable pyruvoyl-dependent arginine decarboxylase from Chlorobaculum parvum (strain DSM 263 / NCIMB 8327) (Chlorobium vibrioforme subsp. thiosulfatophilum).